A 355-amino-acid chain; its full sequence is MAASHALKPILELLPEELPGEGYRRAQIAHWLYAKGARDFSEMTDLPKALREALAREWRLSEFSLVQAFPSQDGSVKYLFTLLDGKKTEAVYMPYENRKTVCLSTMVGCPAGCTFCATGALGFGRNLTAAEILDQLLTIAYHQGLSPREIRNVVLMGMGEPLLNLRNVLKAVRIMLHKKALALSPRRVTLSTVGIPKGIYRLAEEDLGVRLALSLHAPDDETRRKIIPTAHRYPIAEIMEAVRHYHAKTKRRVTFEYTLLKGVNDHLWQARLLAKLLKGLSAHVNLIPFNPWEGAPVVGTPRAGVLAFAEELKRLGVPTSIRWSRGQDVGAACGQLALKVPRPLTLTPLPGGAGR.

Catalysis depends on glutamate 89, which acts as the Proton acceptor. Positions 95-322 (YENRKTVCLS…KRLGVPTSIR (228 aa)) constitute a Radical SAM core domain. A disulfide bridge connects residues cysteine 102 and cysteine 333. Cysteine 109, cysteine 113, and cysteine 116 together coordinate [4Fe-4S] cluster. S-adenosyl-L-methionine-binding positions include 159–160 (GE), serine 191, 214–216 (SLH), and asparagine 290. The S-methylcysteine intermediate role is filled by cysteine 333.

The protein belongs to the radical SAM superfamily. RlmN family. [4Fe-4S] cluster serves as cofactor.

Its subcellular location is the cytoplasm. It carries out the reaction adenosine(2503) in 23S rRNA + 2 reduced [2Fe-2S]-[ferredoxin] + 2 S-adenosyl-L-methionine = 2-methyladenosine(2503) in 23S rRNA + 5'-deoxyadenosine + L-methionine + 2 oxidized [2Fe-2S]-[ferredoxin] + S-adenosyl-L-homocysteine. The catalysed reaction is adenosine(37) in tRNA + 2 reduced [2Fe-2S]-[ferredoxin] + 2 S-adenosyl-L-methionine = 2-methyladenosine(37) in tRNA + 5'-deoxyadenosine + L-methionine + 2 oxidized [2Fe-2S]-[ferredoxin] + S-adenosyl-L-homocysteine. Specifically methylates position 2 of adenine 2503 in 23S rRNA and position 2 of adenine 37 in tRNAs. In Thermus thermophilus (strain ATCC 27634 / DSM 579 / HB8), this protein is Probable dual-specificity RNA methyltransferase RlmN.